The sequence spans 219 residues: 2-C-methyl-D-erythritol 4-phosphate cytidylyltransferase (219 aa).

This sequence belongs to the IspD/TarI cytidylyltransferase family. IspD subfamily.

It carries out the reaction 2-C-methyl-D-erythritol 4-phosphate + CTP + H(+) = 4-CDP-2-C-methyl-D-erythritol + diphosphate. It functions in the pathway isoprenoid biosynthesis; isopentenyl diphosphate biosynthesis via DXP pathway; isopentenyl diphosphate from 1-deoxy-D-xylulose 5-phosphate: step 2/6. Its function is as follows. Catalyzes the formation of 4-diphosphocytidyl-2-C-methyl-D-erythritol from CTP and 2-C-methyl-D-erythritol 4-phosphate (MEP). This is 2-C-methyl-D-erythritol 4-phosphate cytidylyltransferase from Endomicrobium trichonymphae.